Here is a 236-residue protein sequence, read N- to C-terminus: Sensory rhodopsin I (236 aa).

Transmembrane regions (helical) follow at residues 6 to 26 (VVYG…GFLY), 37 to 57 (ILAA…AMVF), 74 to 94 (YLDW…TAGA), 98 to 118 (AIFG…GAVV), 126 to 146 (ALFG…YLIF), 167 to 187 (VGLL…GLGF), and 192 to 212 (GVSI…VYFF). N6-(retinylidene)lysine is present on Lys205.

Belongs to the archaeal/bacterial/fungal opsin family. Interacts with Htr1. The covalent binding of retinal to the apoprotein, bacterioopsin, generates bacteriorhodopsin.

Its subcellular location is the membrane. Photoattractant rhodopsin. In Haloarcula marismortui (strain ATCC 43049 / DSM 3752 / JCM 8966 / VKM B-1809) (Halobacterium marismortui), this protein is Sensory rhodopsin I (sop1).